Here is a 573-residue protein sequence, read N- to C-terminus: Leucine aminopeptidase, chloroplastic (573 aa).

Residues 1-53 (MATLRVSSLLASSPSSLHCNPSVFTKCQSSPRWAFSFSVTPLCSRRSKRIVHC) constitute a chloroplast transit peptide. Residues Lys-342 and Asp-347 each contribute to the Mn(2+) site. Residue Lys-354 is part of the active site. Mn(2+) contacts are provided by Asp-367, Asp-427, and Glu-429. The active site involves Arg-431.

This sequence belongs to the peptidase M17 family. As to quaternary structure, homohexamer (dimer of homotrimers). It depends on Mn(2+) as a cofactor. As to expression, in tubers and floral buds of untreated plants. After abscisic acid (ABA) treatment or mechanical wounding is mostly accumulated in leaves, to a lesser extent in stems, but not in roots.

The protein resides in the plastid. The protein localises to the chloroplast. It catalyses the reaction Release of an N-terminal amino acid, Xaa-|-Yaa-, in which Xaa is preferably Leu, but may be other amino acids including Pro although not Arg or Lys, and Yaa may be Pro. Amino acid amides and methyl esters are also readily hydrolyzed, but rates on arylamides are exceedingly low.. The enzyme catalyses Release of N-terminal proline from a peptide.. Presumably involved in the processing and regular turnover of intracellular proteins. The sequence is that of Leucine aminopeptidase, chloroplastic (LAP) from Solanum tuberosum (Potato).